A 398-amino-acid polypeptide reads, in one-letter code: S-adenosylmethionine synthase (398 aa).

His-16 is a binding site for ATP. A Mg(2+)-binding site is contributed by Asp-18. Position 51 (Glu-51) interacts with K(+). L-methionine is bound by residues Glu-64 and Gln-108. Positions 108-118 (QSADIAQGVDA) are flexible loop. Residues 176–178 (DSK), 242–243 (KF), Asp-251, 257–258 (RK), Ala-274, and Lys-278 contribute to the ATP site. Asp-251 provides a ligand contact to L-methionine. Lys-282 serves as a coordination point for L-methionine.

The protein belongs to the AdoMet synthase family. Homotetramer; dimer of dimers. Requires Mg(2+) as cofactor. K(+) is required as a cofactor.

Its subcellular location is the cytoplasm. It catalyses the reaction L-methionine + ATP + H2O = S-adenosyl-L-methionine + phosphate + diphosphate. Its pathway is amino-acid biosynthesis; S-adenosyl-L-methionine biosynthesis; S-adenosyl-L-methionine from L-methionine: step 1/1. Catalyzes the formation of S-adenosylmethionine (AdoMet) from methionine and ATP. The overall synthetic reaction is composed of two sequential steps, AdoMet formation and the subsequent tripolyphosphate hydrolysis which occurs prior to release of AdoMet from the enzyme. The sequence is that of S-adenosylmethionine synthase from Bradyrhizobium diazoefficiens (strain JCM 10833 / BCRC 13528 / IAM 13628 / NBRC 14792 / USDA 110).